Reading from the N-terminus, the 194-residue chain is AN1-type zinc finger protein 2A (194 aa).

AN1-type zinc fingers lie at residues 4 to 52 (PDLG…QKDV) and 94 to 142 (KIFT…RPTI). The Zn(2+) site is built by Cys-10, Cys-15, Cys-25, Cys-28, Cys-33, His-36, His-42, Cys-44, Cys-100, Cys-105, Cys-115, Cys-118, Cys-123, His-126, His-132, and Cys-134. The interval 145–164 (GCSPVTASESKPSGDPHPGS) is disordered.

It is found in the cytoplasm. It localises to the nucleus. In Pongo abelii (Sumatran orangutan), this protein is AN1-type zinc finger protein 2A (ZFAND2A).